Reading from the N-terminus, the 245-residue chain is DNA polymerase sliding clamp (245 aa).

It belongs to the PCNA family. Homotrimer. The subunits circularize to form a toroid; DNA passes through its center. Replication factor C (RFC) is required to load the toroid on the DNA.

Sliding clamp subunit that acts as a moving platform for DNA processing. Responsible for tethering the catalytic subunit of DNA polymerase and other proteins to DNA during high-speed replication. The chain is DNA polymerase sliding clamp from Methanosarcina mazei (strain ATCC BAA-159 / DSM 3647 / Goe1 / Go1 / JCM 11833 / OCM 88) (Methanosarcina frisia).